Consider the following 648-residue polypeptide: RalA-binding protein 1 (648 aa).

The segment at 1–158 is disordered; the sequence is MTECFLPPSS…KKSKDLTAAD (158 aa). T2 is subject to N-acetylthreonine. Polar residues predominate over residues 24–33; it reads LTRTPSSEEI. S29, S30, and S34 each carry phosphoserine. T44 carries the post-translational modification Phosphothreonine. A phosphoserine mark is found at S48 and S62. The span at 52-68 shows a compositional bias: basic and acidic residues; the sequence is DVLHEPPDTVSDDDKDH. An ATP-binding site is contributed by 69 to 74; that stretch reads GKKKGK. Basic residues predominate over residues 69 to 79; sequence GKKKGKFKKKE. Phosphoserine is present on residues S92 and S93. Residues 102 to 118 are compositionally biased toward basic residues; sequence KVKRSKGIHVFKKPSFS. A nuclear localization signal region spans residues 102-119; the sequence is KVKRSKGIHVFKKPSFSK. A compositionally biased stretch (basic and acidic residues) spans 119–155; it reads KKKEKDFKIKEKPKEEKHKEEKHKEEKHKEKKSKDLT. A mediates association with membranes and could form transmembrane domains region spans residues 154-219; the sequence is LTAADVVKQW…PAVFRECVDY (66 aa). A Rho-GAP domain is found at 192–380; sequence VPLVDAVERT…VVLKQVTRPL (189 aa). Residues 403-499 are mediates interaction with RALA and RALB; sequence RRQEFLLNCL…LTEQEELLAM (97 aa). 418 to 425 provides a ligand contact to ATP; that stretch reads GGIKDLSK. Residues S461 and S463 each carry the phosphoserine modification. The mediates interaction with REPS1 and REPS2 stretch occupies residues 500-648; the sequence is EQFLRRQIAS…PSKDRKETPI (149 aa). 2 disordered regions span residues 525 to 552 and 598 to 648; these read QSRQ…EEEL and RAKS…ETPI. Acidic residues predominate over residues 536–552; it reads EEYSSDSESESEDEEEL. Positions 629 to 648 are enriched in basic and acidic residues; sequence RVAKEQAKASPSKDRKETPI. The residue at position 638 (S638) is a Phosphoserine.

In terms of assembly, interacts with the GTP-bound form of RALA (via effector domain); during mitosis, recruits RALBP1 to the mitochondrion where it promotes DNM1L phosphorylation and mitochondrial fission. Interacts with DNM1L; mediates its mitotic kinase cyclin B-CDK1-mediated phosphorylation during mitosis to promote mitochondrial fission. Interacts with the mitotic kinase cyclin B-CDK1 during mitosis. Interacts with the GTP-bound form of RALB (via effector domain). Interacts with REPS1; the interaction is direct and does not affect RALA-binding nor GTPase activator activity of RALBP1. Interacts with REPS2; the interaction is direct and does not affect RALA-binding nor GTPase activator activity of RALBP1. Interacts with EPN1, NUMB and TFAP2A during interphase and mitosis. Interacts with AP2M1; as part of the AP2 complex. Interacts with CDC42. Interacts with RAC1. In terms of processing, tyrosine-phosphorylated upon stimulation of cells with EGF. May undergo proteolytic cleavage to give peptides which reassemble to form a transporter complex. Ubiquitous. The highest level of expression was observed in ovaries and skeletal muscle, whereas the lowest was found in spleen, liver and peripheral blood leukocytes.

The protein localises to the cell membrane. Its subcellular location is the cytoplasm. It localises to the cytosol. The protein resides in the cytoskeleton. It is found in the spindle pole. The protein localises to the nucleus. Its subcellular location is the mitochondrion. It catalyses the reaction an S-substituted glutathione(in) + ATP + H2O = an S-substituted glutathione(out) + ADP + phosphate + H(+). The catalysed reaction is ATP + H2O + xenobioticSide 1 = ADP + phosphate + xenobioticSide 2.. It carries out the reaction leukotriene C4(in) + ATP + H2O = leukotriene C4(out) + ADP + phosphate + H(+). In terms of biological role, multifunctional protein that functions as a downstream effector of RALA and RALB. As a GTPase-activating protein/GAP can inactivate CDC42 and RAC1 by stimulating their GTPase activity. As part of the Ral signaling pathway, may also regulate ligand-dependent EGF and insulin receptors-mediated endocytosis. During mitosis, may act as a scaffold protein in the phosphorylation of EPSIN/EPN1 by the mitotic kinase cyclin B-CDK1, preventing endocytosis during that phase of the cell cycle. During mitosis, also controls mitochondrial fission as an effector of RALA. Recruited to mitochondrion by RALA, acts as a scaffold to foster the mitotic kinase cyclin B-CDK1-mediated phosphorylation and activation of DNM1L. Could also function as a primary ATP-dependent active transporter for glutathione conjugates of electrophiles. May also actively catalyze the efflux of a wide range of substrates including xenobiotics like doxorubicin (DOX) contributing to cell multidrug resistance. The polypeptide is RalA-binding protein 1 (Mus musculus (Mouse)).